Reading from the N-terminus, the 331-residue chain is Putative T-box protein 36 (331 aa).

Residues 29–210 constitute a DNA-binding region (T-box); that stretch reads EITKKQWNQL…MNRFSRKRKY (182 aa).

It localises to the nucleus. This Caenorhabditis elegans protein is Putative T-box protein 36 (tbx-36).